A 305-amino-acid polypeptide reads, in one-letter code: Urease accessory protein UreD (305 aa).

The protein belongs to the UreD family. As to quaternary structure, ureD, UreF and UreG form a complex that acts as a GTP-hydrolysis-dependent molecular chaperone, activating the urease apoprotein by helping to assemble the nickel containing metallocenter of UreC. The UreE protein probably delivers the nickel.

It is found in the cytoplasm. Functionally, required for maturation of urease via the functional incorporation of the urease nickel metallocenter. This Delftia acidovorans (strain DSM 14801 / SPH-1) protein is Urease accessory protein UreD.